A 37-amino-acid chain; its full sequence is Large ribosomal subunit protein bL36 (37 aa).

Belongs to the bacterial ribosomal protein bL36 family.

This Clostridioides difficile (strain 630) (Peptoclostridium difficile) protein is Large ribosomal subunit protein bL36.